The following is a 379-amino-acid chain: NuA4 complex subunit EAF3 homolog (379 aa).

One can recognise a Tudor-knot domain in the interval 6 to 61 (EENEKVLVHHQNRIYEAKIIKVDPKTSKSDKKKPLYFIHYLGWKEKWNEWIEPNKI). Positions 75–212 (TNIKASTTSL…KRNDSKSSHF (138 aa)) are disordered. Over residues 78-87 (KASTTSLNNK) the composition is skewed to low complexity. A compositionally biased stretch (acidic residues) spans 111-141 (ENSDEDENESELEDGGGEDADEGGEDIEDQE). A compositionally biased stretch (low complexity) spans 165–199 (SSSSSSSSKSNNNNNNNNNNNNNNNNNNNNNNNNN). The region spanning 214–377 (STKFIDIEIP…ASSPYLKAAS (164 aa)) is the MRG domain.

As to quaternary structure, component of the NuA4 histone acetyltransferase complex.

Its subcellular location is the nucleus. Its function is as follows. Component of the NuA4 histone acetyltransferase complex which is involved in transcriptional activation of selected genes principally by acetylation of nucleosomal histone H4 and H2A. The NuA4 complex is also involved in DNA repair. Also a component of a complex which acts to repress transcription by deacetylation of nucleosomal histones. The protein is NuA4 complex subunit EAF3 homolog of Dictyostelium discoideum (Social amoeba).